Here is a 697-residue protein sequence, read N- to C-terminus: Potassium-transporting ATPase ATP-binding subunit (697 aa).

Helical transmembrane passes span 55–75, 79–99, 245–265, and 271–291; these read PIMF…FLPS, SIPG…VLFA, LTLI…YLGF, and VLVA…LSAI. Catalysis depends on Asp-324, which acts as the 4-aspartylphosphate intermediate. Residues Asp-361, Glu-365, 393 to 400, and Lys-412 contribute to the ATP site; that span reads FKAETRMS. Mg(2+) is bound by residues Asp-535 and Asp-539. Helical transmembrane passes span 605–625, 633–653, and 677–697; these read FAII…LNIM, AILS…PLAM, and GGVI…GLFI.

It belongs to the cation transport ATPase (P-type) (TC 3.A.3) family. Type IA subfamily. In terms of assembly, the system is composed of three essential subunits: KdpA, KdpB and KdpC.

Its subcellular location is the cell membrane. The enzyme catalyses K(+)(out) + ATP + H2O = K(+)(in) + ADP + phosphate + H(+). Its function is as follows. Part of the high-affinity ATP-driven potassium transport (or Kdp) system, which catalyzes the hydrolysis of ATP coupled with the electrogenic transport of potassium into the cytoplasm. This subunit is responsible for energy coupling to the transport system and for the release of the potassium ions to the cytoplasm. This chain is Potassium-transporting ATPase ATP-binding subunit, found in Bacillus cereus (strain ZK / E33L).